The chain runs to 588 residues: Arginine--tRNA ligase (588 aa).

The 'HIGH' region motif lies at 126–136 (PNIAKEMHVGH).

Belongs to the class-I aminoacyl-tRNA synthetase family. Monomer.

The protein localises to the cytoplasm. It carries out the reaction tRNA(Arg) + L-arginine + ATP = L-arginyl-tRNA(Arg) + AMP + diphosphate. The chain is Arginine--tRNA ligase from Nostoc sp. (strain PCC 7120 / SAG 25.82 / UTEX 2576).